The primary structure comprises 380 residues: Cytochrome b (380 aa).

The next 4 helical transmembrane spans lie at 33–53, 77–98, 113–133, and 178–198; these read FGSL…FLAM, WLIR…YLHV, WNIG…GYVL, and FFAF…IHLL. The heme b site is built by His83 and His97. Heme b is bound by residues His182 and His196. Residue His201 coordinates a ubiquinone. Helical transmembrane passes span 226–246, 288–308, 320–340, and 347–367; these read YKDL…ALFS, LGGV…PMLH, LSQI…WIGG, and FVLI…IALP.

Belongs to the cytochrome b family. In terms of assembly, the cytochrome bc1 complex contains 3 respiratory subunits (MT-CYB, CYC1 and UQCRFS1), 2 core proteins (UQCRC1 and UQCRC2) and probably 6 low-molecular weight proteins. Requires heme b as cofactor.

The protein resides in the mitochondrion inner membrane. In terms of biological role, component of the ubiquinol-cytochrome c reductase complex (complex III or cytochrome b-c1 complex) that is part of the mitochondrial respiratory chain. The b-c1 complex mediates electron transfer from ubiquinol to cytochrome c. Contributes to the generation of a proton gradient across the mitochondrial membrane that is then used for ATP synthesis. The protein is Cytochrome b (mt-cyb) of Acipenser transmontanus (White sturgeon).